A 441-amino-acid polypeptide reads, in one-letter code: Protein translocase subunit SecY (441 aa).

The next 10 helical transmembrane spans lie at 25–45, 78–98, 126–146, 155–175, 184–204, 218–238, 275–295, 318–338, 376–396, and 398–418; these read YFVIFSLIVFRMGSYIPIPGI, IFALGIMPFISSSIIVQILTL, LILAALQSFGMSISLPNIPGL, ISFYGIAIISLITGTIFLMWL, IGNGISIIIFSGIVSGLPSSF, VLLFCFIGIVIFLVTLLVVYI, VIPAIFASSIVLFPATIASWF, YILTYITAIIFFCFFYTGLAF, FLGSMYMAFICLVPELMRFFM, and VPFYFGGTSLLIIVVVIIDFI.

This sequence belongs to the SecY/SEC61-alpha family. As to quaternary structure, component of the Sec protein translocase complex. Heterotrimer consisting of SecY, SecE and SecG subunits. The heterotrimers can form oligomers, although 1 heterotrimer is thought to be able to translocate proteins. Interacts with the ribosome. Interacts with SecDF, and other proteins may be involved. Interacts with SecA.

It is found in the cell membrane. The central subunit of the protein translocation channel SecYEG. Consists of two halves formed by TMs 1-5 and 6-10. These two domains form a lateral gate at the front which open onto the bilayer between TMs 2 and 7, and are clamped together by SecE at the back. The channel is closed by both a pore ring composed of hydrophobic SecY resides and a short helix (helix 2A) on the extracellular side of the membrane which forms a plug. The plug probably moves laterally to allow the channel to open. The ring and the pore may move independently. The sequence is that of Protein translocase subunit SecY from Buchnera aphidicola subsp. Baizongia pistaciae (strain Bp).